A 1330-amino-acid chain; its full sequence is Protein PUTATIVE RECOMBINATION INITIATION DEFECT 1 (1330 aa).

The tract at residues 1310–1330 (REGRVSPIQEETRQMQTERIV) is disordered.

Interacts with SPO11-1. According to PubMed:28855712, may interact with SPO11-2; this is in contradiction with PubMed:9461215 which claims that it seems to not interact with SPO11-2. Binds to DFO, PRD3 and MTOPVIB. Facilitates an interaction between PRD3 and DFO. In terms of tissue distribution, expressed in flower buds.

Its subcellular location is the nucleus. Its function is as follows. Involved in DNA cleavage that forms the double-strand breaks (DSB) that initiate meiotic recombination. The sequence is that of Protein PUTATIVE RECOMBINATION INITIATION DEFECT 1 from Arabidopsis thaliana (Mouse-ear cress).